The chain runs to 331 residues: 2-oxoglutarate-dependent dioxygenase (331 aa).

Residues 186 to 292 (PACPLRLLHY…RYSVVFFMDG (107 aa)) enclose the Fe2OG dioxygenase domain. 3 residues coordinate Fe cation: His214, Asp216, and His272. Position 283 (Arg283) interacts with 2-oxoglutarate.

The protein belongs to the iron/ascorbate-dependent oxidoreductase family. Fe(2+) serves as cofactor.

It participates in mycotoxin biosynthesis. Its function is as follows. 2-oxoglutarate-dependent dioxygenase; part of the gene cluster that mediates the biosynthesis of the selective antifungal agent ascochitine, an o-quinone methide that plays a possible protective role against other microbial competitors in nature and is considered to be important for pathogenicity of legume-associated Didymella species. The pathway probably begins with the synthesis of a keto-aldehyde intermediate by the ascochitine non-reducing polyketide synthase pksAC from successive condensations of 4 malonyl-CoA units, presumably with a simple acetyl-CoA starter unit. Release of the keto-aldehyde intermediate is consistent with the presence of the C-terminal reductive release domain. The HR-PKS (orf7) probably makes a diketide starter unit which is passed to the non-reducing polyketide synthase pksAC for further extension, producing ascochital and ascochitine. The aldehyde dehydrogenase (orf1), the 2-oxoglutarate-dependent dioxygenase (orf3) and the dehydrogenase (orf9) are probably involved in subsequent oxidations of methyl groups to the carboxylic acid of the heterocyclic ring. The ascochitine gene cluster also includes a gene encoding a short peptide with a cupin domain (orf2) that is often found in secondary metabolite gene clusters and which function has still to be determined. This is 2-oxoglutarate-dependent dioxygenase from Didymella fabae (Leaf and pod spot disease fungus).